Reading from the N-terminus, the 356-residue chain is Carbohydrate sulfotransferase 10 (356 aa).

Over Met-1–Leu-6 the chain is Cytoplasmic. The chain crosses the membrane as a helical; Signal-anchor for type II membrane protein span at residues Leu-7–Leu-27. At Thr-28–Asn-356 the chain is on the lumenal side. Asn-99 carries N-linked (GlcNAc...) asparagine glycosylation. 3'-phosphoadenylyl sulfate is bound by residues Pro-127–Gln-133 and Arg-189–Ser-197. N-linked (GlcNAc...) asparagine glycosylation is found at Asn-228 and Asn-316.

Belongs to the sulfotransferase 2 family.

Its subcellular location is the golgi apparatus membrane. It catalyses the reaction 3-O-{beta-D-GlcA-(1-&gt;[3)-alpha-D-Xyl-(1-&gt;3)-beta-D-GlcA-(1-&gt;](n)-4)-beta-D-Xyl-(1-&gt;4)-Rib-ol-P-Rib-ol-P-3-beta-D-GalNAc-(1-&gt;3)-beta-D-GlcNAc-(1-&gt;4)-O-6-P-alpha-D-Man}-L-Thr-[protein] + 3'-phosphoadenylyl sulfate = 3-O-{O-3-S-beta-D-GlcA-(1-&gt;[3)-alpha-D-Xyl-(1-&gt;3)-beta-D-GlcA-(1-&gt;](n)-4)-beta-D-Xyl-(1-&gt;4)-Rib-ol-P-Rib-ol-P-3-beta-D-GalNAc-(1-&gt;3)-beta-D-GlcNAc-(1-&gt;4)-O-6-P-alpha-D-Man}-L-Thr-[protein] + adenosine 3',5'-bisphosphate + H(+). It carries out the reaction 17beta-estradiol 3-O-(beta-D-glucuronate) + 3'-phosphoadenylyl sulfate = 17beta-estradiol 3-O-(3-sulfo-beta-D-glucuronate) + adenosine 3',5'-bisphosphate + H(+). The catalysed reaction is 17beta-estradiol 3-O-(beta-D-glucuronate) 17-sulfate + 3'-phosphoadenylyl sulfate = 17beta-estradiol 3-O-(3-sulfo-beta-D-glucuronate) 17-sulfate + adenosine 3',5'-bisphosphate + H(+). The enzyme catalyses 17beta-estradiol 17-O-(beta-D-glucuronate) + 3'-phosphoadenylyl sulfate = 17beta-estradiol 17-O-(3-sulfo-beta-D-glucuronate) + adenosine 3',5'-bisphosphate + H(+). It catalyses the reaction 16alpha,17beta-estriol 3-O-(beta-D-glucuronate) + 3'-phosphoadenylyl sulfate = 16alpha,17beta-estriol 3-O-(3-sulfo-beta-D-glucuronate) + adenosine 3',5'-bisphosphate + H(+). It carries out the reaction 16alpha,17beta-estriol 16-O-(beta-D-glucuronate) + 3'-phosphoadenylyl sulfate = 16alpha,17beta-estriol 16-O-(3-sulfo-beta-D-glucuronate) + adenosine 3',5'-bisphosphate + H(+). The catalysed reaction is 16alpha,17beta-estriol 17-O-(beta-D-glucuronate) + 3'-phosphoadenylyl sulfate = 16alpha,17beta-estriol 17-O-(3-sulfo-beta-D-glucuronate) + adenosine 3',5'-bisphosphate + H(+). The enzyme catalyses estrone 3-O-(beta-D-glucuronate) + 3'-phosphoadenylyl sulfate = estrone 3-O-(3-sulfo-beta-D-glucuronate) + adenosine 3',5'-bisphosphate + H(+). It catalyses the reaction 3alpha,20alpha-dihydroxy-5beta-pregnane 3-O-(beta-D-glucuronate) + 3'-phosphoadenylyl sulfate = 3alpha,20alpha-dihydroxy-5beta-pregnane 3-O-(3-sulfo-beta-D-glucuronate) + adenosine 3',5'-bisphosphate + H(+). It carries out the reaction testosterone 17-O-(beta-D-glucuronate) + 3'-phosphoadenylyl sulfate = testosterone 17-O-(3-sulfo-beta-D-glucuronate) + adenosine 3',5'-bisphosphate + H(+). The catalysed reaction is 3beta-androst-5-en-17-one 3-O-(beta-D-glucuronate) + 3'-phosphoadenylyl sulfate = 3beta-androst-5-en-17-one 3-O-(3-sulfo-beta-D-glucuronate) + adenosine 3',5'-bisphosphate + H(+). The enzyme catalyses 3alpha,17alpha-dihydroxy-5beta-androstane-11-one-17beta-carboxylate 3-O-(beta-D-glucuronate) + 3'-phosphoadenylyl sulfate = 3alpha,17alpha-dihydroxy-5beta-androstane-11-one-17beta-carboxylate 3-O-(3-sulfo-beta-D-glucuronate) + adenosine 3',5'-bisphosphate + H(+). It catalyses the reaction 3alpha-hydroxyetiocholan-17-one 3-O-(beta-D-glucuronate) + 3'-phosphoadenylyl sulfate = 3alpha-hydroxyetiocholan-17-one 3-O-(3-sulfo-beta-D-glucuronate) + adenosine 3',5'-bisphosphate + H(+). It participates in steroid metabolism. It functions in the pathway protein modification; carbohydrate sulfation. Catalyzes the transfer of sulfate from 3'-phosphoadenylyl sulfate (PAPS) to position 3 of terminal glucuronic acid of both protein- and lipid-linked oligosaccharides. Participates in biosynthesis of HNK-1 carbohydrate structure 3-O-sulfo-beta-D-GlcA-(1-&gt;3)-beta-D-Gal-(1-&gt;4)-D-GlcNAc-R, a sulfated glucuronyl-lactosaminyl residue carried by many neural recognition molecules, which is involved in cell interactions during ontogenetic development and in synaptic plasticity in the adult. May be indirectly involved in synapse plasticity of the hippocampus, via its role in HNK-1 biosynthesis. Sulfates terminal glucuronyl residue of the laminin globular (LG)-domain binding epitope on DAG1/alpha-dystroglycan and prevents further polymerization by LARGE1 glycosyltransferase. Likely defines the chain length of LG epitope, conferring binding specificity to extracellular matrix components. Plays a role in down-regulating the steroid hormones. Sulfates glucuronidated estrogens and androgens with an impact in hormone cycle and fertility. Has a preference for glucuronyl moiety at the 3-hydroxyl group of a sterol ring rather than the 17-hydroxyl group, showing high catalytic efficiency for 17beta-estradiol 3-O-(beta-D-glucuronate) and dehydroepiandrosterone 3-O-(beta-D-glucuronate) hormones. The chain is Carbohydrate sulfotransferase 10 (CHST10) from Pongo abelii (Sumatran orangutan).